Reading from the N-terminus, the 120-residue chain is Large ribosomal subunit protein uL22 (120 aa).

This sequence belongs to the universal ribosomal protein uL22 family. Part of the 50S ribosomal subunit.

Its function is as follows. This protein binds specifically to 23S rRNA; its binding is stimulated by other ribosomal proteins, e.g. L4, L17, and L20. It is important during the early stages of 50S assembly. It makes multiple contacts with different domains of the 23S rRNA in the assembled 50S subunit and ribosome. In terms of biological role, the globular domain of the protein is located near the polypeptide exit tunnel on the outside of the subunit, while an extended beta-hairpin is found that lines the wall of the exit tunnel in the center of the 70S ribosome. The protein is Large ribosomal subunit protein uL22 of Corynebacterium aurimucosum (strain ATCC 700975 / DSM 44827 / CIP 107346 / CN-1) (Corynebacterium nigricans).